The following is a 901-amino-acid chain: Protein translocase subunit SecA (901 aa).

Residues glutamine 87, glycine 105–threonine 109, and aspartate 512 each bind ATP. The disordered stretch occupies residues histidine 859 to glutamine 901. Zn(2+) is bound by residues cysteine 885, cysteine 887, cysteine 896, and histidine 897. The span at lysine 891 to glutamine 901 shows a compositional bias: basic residues.

Belongs to the SecA family. As to quaternary structure, monomer and homodimer. Part of the essential Sec protein translocation apparatus which comprises SecA, SecYEG and auxiliary proteins SecDF-YajC and YidC. The cofactor is Zn(2+).

The protein localises to the cell inner membrane. The protein resides in the cytoplasm. The enzyme catalyses ATP + H2O + cellular proteinSide 1 = ADP + phosphate + cellular proteinSide 2.. Functionally, part of the Sec protein translocase complex. Interacts with the SecYEG preprotein conducting channel. Has a central role in coupling the hydrolysis of ATP to the transfer of proteins into and across the cell membrane, serving both as a receptor for the preprotein-SecB complex and as an ATP-driven molecular motor driving the stepwise translocation of polypeptide chains across the membrane. This chain is Protein translocase subunit SecA, found in Shigella dysenteriae serotype 1 (strain Sd197).